The primary structure comprises 301 residues: Ribosomal RNA small subunit methyltransferase H (301 aa).

Residues Gly31–Tyr33, Asp49, Phe76, Asp97, and Gln104 each bind S-adenosyl-L-methionine.

This sequence belongs to the methyltransferase superfamily. RsmH family.

It localises to the cytoplasm. The catalysed reaction is cytidine(1402) in 16S rRNA + S-adenosyl-L-methionine = N(4)-methylcytidine(1402) in 16S rRNA + S-adenosyl-L-homocysteine + H(+). Specifically methylates the N4 position of cytidine in position 1402 (C1402) of 16S rRNA. This chain is Ribosomal RNA small subunit methyltransferase H, found in Ehrlichia ruminantium (strain Gardel).